Reading from the N-terminus, the 756-residue chain is Inactive carboxypeptidase-like protein X2 (756 aa).

The N-terminal stretch at 1–25 is a signal peptide; it reads MSRPGTATPALALVLLAVTLAGVGA. Residues 51-131 form a disordered region; that stretch reads EPELETFSPP…DHSVRVARED (81 aa). Basic and acidic residues predominate over residues 68-78; the sequence is EWERRPQEPRP. Basic residues predominate over residues 79-90; the sequence is PKRATKPKKAPK. The segment covering 113-131 has biased composition (basic and acidic residues); the sequence is KSSEKAANDDHSVRVARED. Positions 134–293 constitute an F5/8 type C domain; that stretch reads ESCPPLGLET…ICMRMEILGC (160 aa). A disulfide bridge links Cys-136 with Cys-293. N-linked (GlcNAc...) asparagine glycosylation is found at Asn-231, Asn-241, Asn-281, Asn-337, and Asn-491. One can recognise a Peptidase M14 domain in the interval 317-640; that stretch reads KHHNYKEMRQ…ESLIVFMEQV (324 aa).

Belongs to the peptidase M14 family.

Its subcellular location is the secreted. May be involved in cell-cell interactions. The sequence is that of Inactive carboxypeptidase-like protein X2 (CPXM2) from Homo sapiens (Human).